Reading from the N-terminus, the 363-residue chain is MIETFYEVMRRQGISRRSFLKYCSLTATSLGLSPVFVPKIVHAMETKPRTPVLWLHGLECTCCSESFIRSAHPLAKDVVLSMISLDYDDTLMAAAGHQAEAILGEVMTKYKGNYILAVEGNPPLNQDGMSCIIGGKPFIDQLRHVAKDAKAIISWGSCASWGCVQAAKANPTQATPIHKVITDKPIIKVPGCPPIAEVMTGVITYMLTFDRFPELDRQGRPKMFYSQRIHDKCYRRPHFDAGQFVESWDDESARKGYCLYKVGCKGPTTYNACSTTRWNGGTSFPIQSGHGCIGCSEDGFWDKGSFYSRLTNIHQFGIEANADSVGVTAVGVVGAATAAHAAVSAIKRARHKDAAQDTAATQK.

The tat-type signal signal peptide spans 1 to 43 (MIETFYEVMRRQGISRRSFLKYCSLTATSLGLSPVFVPKIVHA). 8 residues coordinate [4Fe-4S] cluster: cysteine 60, cysteine 63, cysteine 158, cysteine 192, histidine 230, cysteine 233, cysteine 258, and cysteine 264. [3Fe-4S] cluster-binding residues include cysteine 273, cysteine 292, and cysteine 295.

The protein belongs to the [NiFe]/[NiFeSe] hydrogenase small subunit family. As to quaternary structure, heterodimer of a large and a small subunit. Requires [4Fe-4S] cluster as cofactor. It depends on [3Fe-4S] cluster as a cofactor. Predicted to be exported by the Tat system. The position of the signal peptide cleavage has not been experimentally proven.

It is found in the cell membrane. The catalysed reaction is H2 + A = AH2. This enzyme recycles the H(2) produced by nitrogenase to increase the production of ATP and to protect nitrogenase against inhibition or damage by O(2) under carbon- or phosphate-limited conditions. This is Uptake hydrogenase small subunit (hupS) from Alcaligenes hydrogenophilus.